Reading from the N-terminus, the 299-residue chain is ATP phosphoribosyltransferase (299 aa).

The protein belongs to the ATP phosphoribosyltransferase family. Long subfamily. In terms of assembly, equilibrium between an active dimeric form, an inactive hexameric form and higher aggregates. Interconversion between the various forms is largely reversible and is influenced by the natural substrates and inhibitors of the enzyme. Requires Mg(2+) as cofactor.

It is found in the cytoplasm. The catalysed reaction is 1-(5-phospho-beta-D-ribosyl)-ATP + diphosphate = 5-phospho-alpha-D-ribose 1-diphosphate + ATP. It participates in amino-acid biosynthesis; L-histidine biosynthesis; L-histidine from 5-phospho-alpha-D-ribose 1-diphosphate: step 1/9. Its activity is regulated as follows. Feedback inhibited by histidine. Functionally, catalyzes the condensation of ATP and 5-phosphoribose 1-diphosphate to form N'-(5'-phosphoribosyl)-ATP (PR-ATP). Has a crucial role in the pathway because the rate of histidine biosynthesis seems to be controlled primarily by regulation of HisG enzymatic activity. This chain is ATP phosphoribosyltransferase, found in Salmonella agona (strain SL483).